The primary structure comprises 277 residues: S-formylglutathione hydrolase FrmB (277 aa).

Residues Ser-145, Asp-221, and His-254 each act as charge relay system in the active site.

The protein belongs to the esterase D family.

The catalysed reaction is S-formylglutathione + H2O = formate + glutathione + H(+). In terms of biological role, serine hydrolase involved in the detoxification of formaldehyde. Hydrolyzes S-formylglutathione to glutathione and formate. The protein is S-formylglutathione hydrolase FrmB (frmB) of Escherichia coli O6:H1 (strain CFT073 / ATCC 700928 / UPEC).